Consider the following 415-residue polypeptide: Tyrosine--tRNA ligase (415 aa).

The 'HIGH' region signature appears at 54 to 63 (PTGRDIHLGH). A 'KMSKS' region motif is present at residues 248–252 (KMSKS). Residue Lys251 participates in ATP binding. The S4 RNA-binding domain maps to 351 to 415 (AKAFYLLSAI…GKKTFRRLTR (65 aa)).

The protein belongs to the class-I aminoacyl-tRNA synthetase family. TyrS type 2 subfamily. In terms of assembly, homodimer.

The protein resides in the cytoplasm. It catalyses the reaction tRNA(Tyr) + L-tyrosine + ATP = L-tyrosyl-tRNA(Tyr) + AMP + diphosphate + H(+). Catalyzes the attachment of tyrosine to tRNA(Tyr) in a two-step reaction: tyrosine is first activated by ATP to form Tyr-AMP and then transferred to the acceptor end of tRNA(Tyr). This chain is Tyrosine--tRNA ligase, found in Prochlorococcus marinus (strain MIT 9313).